Here is a 246-residue protein sequence, read N- to C-terminus: MQATIYDLDGNTDGEVDLPDVFETPVRSDLIGKAVRAAQANRKQDYGSDEYAGLRTPAESFGSGRGQAHVPKQDGRARRVPQAVKGRSAHPPKTEKDRSLDLNDKERQLAVRSALAATADADLVADRGHEFDRDEVPVVVSDDFEDLVKTQEVVSLLEALDVHADIDRADETKIKAGQGSARGRKYRRPASILFVTSDEPSTAARNLAGADVATASEVNTEDLAPGGAPGRLTVFTESALAEVAER.

Positions 37–103 (AAQANRKQDY…TEKDRSLDLN (67 aa)) are disordered. Residues 92-103 (PKTEKDRSLDLN) show a composition bias toward basic and acidic residues.

The protein belongs to the universal ribosomal protein uL4 family. In terms of assembly, part of the 50S ribosomal subunit. Interacts weakly with proteins L18e, L24 and L37e. Has been cross-linked to L18e.

In terms of biological role, one of the primary rRNA binding proteins, this protein initially binds near the 5'-end of the 23S rRNA. It is important during the early stages of 50S assembly. Its function is as follows. Makes multiple contacts with different domains of the 23S rRNA in the assembled 50S subunit. Forms part of the polypeptide exit tunnel, in which it helps forms a bend with protein L22. Contacts the macrolide antibiotic spiramycin in the polypeptide exit tunnel. In Haloarcula marismortui (strain ATCC 43049 / DSM 3752 / JCM 8966 / VKM B-1809) (Halobacterium marismortui), this protein is Large ribosomal subunit protein uL4 (rpl4).